Consider the following 345-residue polypeptide: Holliday junction branch migration complex subunit RuvB (345 aa).

A large ATPase domain (RuvB-L) region spans residues 4–185 (TDRLIAPSTQ…FGIVSRLEFY (182 aa)). ATP is bound by residues Leu-24, Arg-25, Gly-66, Lys-69, Thr-70, Thr-71, 132 to 134 (EDY), Arg-175, Tyr-185, and Arg-222. Thr-70 contacts Mg(2+). Residues 186 to 256 (TADELARIVH…IADAALKMLD (71 aa)) form a small ATPAse domain (RuvB-S) region. Positions 259-345 (KLGFDVMDRK…KIGTGELWQQ (87 aa)) are head domain (RuvB-H). Arg-295, Arg-314, and Arg-319 together coordinate DNA.

The protein belongs to the RuvB family. In terms of assembly, homohexamer. Forms an RuvA(8)-RuvB(12)-Holliday junction (HJ) complex. HJ DNA is sandwiched between 2 RuvA tetramers; dsDNA enters through RuvA and exits via RuvB. An RuvB hexamer assembles on each DNA strand where it exits the tetramer. Each RuvB hexamer is contacted by two RuvA subunits (via domain III) on 2 adjacent RuvB subunits; this complex drives branch migration. In the full resolvosome a probable DNA-RuvA(4)-RuvB(12)-RuvC(2) complex forms which resolves the HJ.

The protein resides in the cytoplasm. The catalysed reaction is ATP + H2O = ADP + phosphate + H(+). Its function is as follows. The RuvA-RuvB-RuvC complex processes Holliday junction (HJ) DNA during genetic recombination and DNA repair, while the RuvA-RuvB complex plays an important role in the rescue of blocked DNA replication forks via replication fork reversal (RFR). RuvA specifically binds to HJ cruciform DNA, conferring on it an open structure. The RuvB hexamer acts as an ATP-dependent pump, pulling dsDNA into and through the RuvAB complex. RuvB forms 2 homohexamers on either side of HJ DNA bound by 1 or 2 RuvA tetramers; 4 subunits per hexamer contact DNA at a time. Coordinated motions by a converter formed by DNA-disengaged RuvB subunits stimulates ATP hydrolysis and nucleotide exchange. Immobilization of the converter enables RuvB to convert the ATP-contained energy into a lever motion, pulling 2 nucleotides of DNA out of the RuvA tetramer per ATP hydrolyzed, thus driving DNA branch migration. The RuvB motors rotate together with the DNA substrate, which together with the progressing nucleotide cycle form the mechanistic basis for DNA recombination by continuous HJ branch migration. Branch migration allows RuvC to scan DNA until it finds its consensus sequence, where it cleaves and resolves cruciform DNA. The sequence is that of Holliday junction branch migration complex subunit RuvB from Methylobacillus flagellatus (strain ATCC 51484 / DSM 6875 / VKM B-1610 / KT).